The sequence spans 559 residues: Apolipoprotein N-acyltransferase 2 (559 aa).

The next 6 membrane-spanning stretches (helical) occupy residues 27–47 (LAGSSVLGLGALVPLYVGFLL), 53–73 (HVACSYGLFVALVHACSSFWL), 86–106 (ASTVGYFFYALPFGVAFACIL), 114–134 (ACAFALVWTLWEWVKSTGILA), 153–173 (IADITGVWGLSFLIPLANACV), and 187–207 (VPVFRLWLLTGCLYCLCSLYG). Positions 221 to 507 (LALAIVQQNA…SAVLHVPVYP (287 aa)) constitute a CN hydrolase domain. Glu288 serves as the catalytic Proton acceptor. The active site involves Lys358. The Nucleophile role is filled by Cys416. The helical transmembrane segment at 519 to 539 (WVIVLCALIFFAEGVRMAVHT) threads the bilayer.

The protein belongs to the CN hydrolase family. Apolipoprotein N-acyltransferase subfamily.

It is found in the cell inner membrane. It catalyses the reaction N-terminal S-1,2-diacyl-sn-glyceryl-L-cysteinyl-[lipoprotein] + a glycerophospholipid = N-acyl-S-1,2-diacyl-sn-glyceryl-L-cysteinyl-[lipoprotein] + a 2-acyl-sn-glycero-3-phospholipid + H(+). It participates in protein modification; lipoprotein biosynthesis (N-acyl transfer). Functionally, catalyzes the phospholipid dependent N-acylation of the N-terminal cysteine of apolipoprotein, the last step in lipoprotein maturation. The sequence is that of Apolipoprotein N-acyltransferase 2 from Treponema pallidum (strain Nichols).